The following is a 693-amino-acid chain: Adhesion G-protein coupled receptor G1 (693 aa).

The first 25 residues, 1 to 25 (MTPQSLLQTTLFLLSLLFLVQGAHG), serve as a signal peptide directing secretion. A heparin-binding site is contributed by 26 to 33 (RGHREDFR). The Extracellular portion of the chain corresponds to 26 to 401 (RGHREDFRFC…SVEVDAVHKH (376 aa)). 2 disulfides stabilise this stretch: Cys35/Cys91 and Cys121/Cys177. Asn39, Asn148, and Asn171 each carry an N-linked (GlcNAc...) asparagine glycan. 190-200 (LKHPQKASRRP) is a binding site for heparin. The 172-residue stretch at 224 to 395 (DMVSFEEDRI…AVLMVSSVEV (172 aa)) folds into the GAIN-B domain. N-linked (GlcNAc...) asparagine glycosylation is found at Asn234, Asn303, Asn324, and Asn341. Disulfide bonds link Cys346/Cys377 and Cys366/Cys379. The segment at 346 to 395 (CVFWVEDPTLSSPGHWSSAGCETVRRETQTSCFCNHLTYFAVLMVSSVEV) is GPS. The interval 384–397 (YFAVLMVSSVEVDA) is stachel. A helical membrane pass occupies residues 402–424 (YLSLLSYVGCVVSALACLVTIAA). Over 425 to 437 (YLCSRVPLPCRRK) the chain is Cytoplasmic. A helical transmembrane segment spans residues 438–460 (PRDYTIKVHMNLLLAVFLLDTSF). Over 461–465 (LLSEP) the chain is Extracellular. The chain crosses the membrane as a helical span at residues 466-495 (VALTGSEAGCRASAIFLHFSLLTCLSWMGL). Residues Cys475 and Cys562 are joined by a disulfide bond. The Cytoplasmic portion of the chain corresponds to 496–510 (EGYNLYRLVVEVFGT). The helical transmembrane segment at 511-533 (YVPGYLLKLSAMGWGFPIFLVTL) threads the bilayer. Topologically, residues 534–562 (VALVDVDNYGPIILAVHRTPEGVIYPSMC) are extracellular. Residues 563 to 588 (WIRDSLVSYITNLGLFSLVFLFNMAM) form a helical membrane-spanning segment. At 589 to 602 (LATMVVQILRLRPH) the chain is on the cytoplasmic side. A helical membrane pass occupies residues 603 to 624 (TQKWSHVLTLLGLSLVLGLPWA). Over 625-628 (LIFF) the chain is Extracellular. A helical membrane pass occupies residues 629-654 (SFASGTFQLVVLYLFSIITSFQGFLI). The Cytoplasmic segment spans residues 655 to 693 (FIWYWSMRLQARGGPSPLKSNSDSARLPISSGSTSSSRI). The tract at residues 670–693 (SPLKSNSDSARLPISSGSTSSSRI) is disordered. Positions 684-693 (SSGSTSSSRI) are enriched in low complexity.

This sequence belongs to the G-protein coupled receptor 2 family. LN-TM7 subfamily. As to quaternary structure, heterodimer of 2 chains generated by proteolytic processing; the large extracellular N-terminal fragment (ADGRG1 NT) and the membrane-bound C-terminal fragment (ADGRG1-CT) predominantly remain associated and non-covalently linked. ADGRG1 NT self-associates in a trans-trans manner; the homophilic interaction enhances receptor signaling. Interacts with TGM2. Interacts with heparin; leading to the reduction of ADGRG1 shedding. Interacts with COL3A1. Part of a GPCR-tetraspanin complex at least consisting of ADGRG1, CD81, eventually CD9, and GNA11 in which CD81 is enhancing the association of ADGRG1 with GNA11. In terms of processing, autoproteolytically cleaved into 2 fragments; the large extracellular N-terminal fragment (ADGRG1 NT) and the membrane-bound C-terminal fragment (ADGRG1 CT) predominantly remain associated and non-covalently linked. Shedding to yield the secreted ADGRG1 N-terminal fragment seems to involve metalloprotease(s). N-glycosylated. Contains sialic acid residues. Post-translationally, ubiquitinated. Undergoes polyubiquitination upon activation. As to expression, widely distributed with highest levels found in thyroid gland, brain and heart. Expressed in a great number of tumor cells. Expression is down-regulated in different tumors from highly metastatic cells.

The protein localises to the cell membrane. The protein resides in the secreted. Its subcellular location is the membrane raft. With respect to regulation, forms a heterodimer of 2 chains generated by proteolytic processing that remain associated through non-covalent interactions mediated by the GAIN-B domain. In the inactivated receptor, the Stachel sequence (also named stalk) is embedded in the GAIN-B domain, where it adopts a beta-strand conformation. On activation, the Stachel moves into the 7 transmembrane region and adopts a twisted hook-shaped configuration that forms contacts within the receptor, leading to coupling of a G-alpha protein, which activates signaling. The cleaved GAIN-B and N-terminal domains can then dissociate from the rest of the receptor. Adhesion G-protein coupled receptor (aGPCR) for steroid hormone 17alpha-hydroxypregnenolone (17-OH), which is involved in cell adhesion and cell-cell interactions. Ligand binding causes a conformation change that triggers signaling via guanine nucleotide-binding proteins (G proteins) and modulates the activity of downstream effectors, such as RhoA pathway. ADGRG1 is coupled to G(12) and/or G(13) G proteins (GNA12 and GNA13, respectively) and mediates the activation Rho small GTPases. Acts as a potent suppressor of ferroptosis: binding to 17-OH-binding initiates signaling that down-regulates CD36 and alleviates ferroptosis-induced liver injury. Ligand-binding also induces cell adhesion activity via association with proteins such as collagen III/COL3A1 and TGM2. Mediates cell matrix adhesion in developing neurons and hematopoietic stem cells. Involved in cortical development, specifically in maintenance of the pial basement membrane integrity and in cortical lamination: association with COL3A1 in the developing brain inhibits neuronal migration via activation of the RhoA pathway. Together with TGM2, acts as a regulator of myelination and myelin repair in oligodendrocyte precursor cells. Acts as a hemostatic sensor of shear force: G protein-coupled receptor signaling is activated in response to shear force in platelets, promoting G(13) G protein signaling, and platelet shape change and aggregation in a COL3A1-dependent manner. Acts as an inhibitor of VEGFA production thereby inhibiting angiogenesis through a signaling pathway mediated by PRKCA. Plays a role in the maintenance of hematopoietic stem cells in bone marrow niche. Plays an essential role in testis development. In Homo sapiens (Human), this protein is Adhesion G-protein coupled receptor G1.